We begin with the raw amino-acid sequence, 223 residues long: Protein Mis18-alpha (223 aa).

Positions 1-30 (MAGTFSLEPCSTSSSCNHQGKRSESSLLEK) are disordered. Over residues 9 to 18 (PCSTSSSCNH) the composition is skewed to polar residues. Residues 21 to 30 (KRSESSLLEK) show a composition bias toward basic and acidic residues. Phosphoserine occurs at positions 33, 36, and 37. Residues 71–169 (PLVFLCTRCR…SVEAVESYTL (99 aa)) enclose the Mis18 domain. 4 residues coordinate Zn(2+): cysteine 76, cysteine 79, cysteine 132, and cysteine 135. Lysine 153 is covalently cross-linked (Glycyl lysine isopeptide (Lys-Gly) (interchain with G-Cter in SUMO2)). Phosphoserine is present on serine 223.

The protein belongs to the mis18 family. In terms of assembly, homodimer, and heterodimer with OIP5/MIS18B. Identified in a complex containing MIS18A, OIP5/MIS18B, MIS18BP1, RBBP7 and RBBP4.

The protein resides in the nucleus. The protein localises to the chromosome. Its subcellular location is the centromere. In terms of biological role, required for recruitment of CENPA to centromeres and normal chromosome segregation during mitosis. The polypeptide is Protein Mis18-alpha (Mis18a) (Rattus norvegicus (Rat)).